The primary structure comprises 473 residues: Cannabinoid receptor 1 (473 aa).

Over 1-118 the chain is Extracellular; that stretch reads MKSILDGLAD…CFMILNPSQQ (118 aa). A required for mitochondrial localization region spans residues 2–23; sequence KSILDGLADTTFRTITTDLLYV. N-linked (GlcNAc...) asparagine glycosylation is found at Asn-79 and Asn-85. A helical membrane pass occupies residues 119-144; it reads LAIAVLSLTLGTFTVLENLLVLCVIL. Topologically, residues 145 to 156 are cytoplasmic; sequence HSRSLRCRPSYH. A helical membrane pass occupies residues 157-177; sequence FIGSLAVADLLGSVIFVYSFV. Residues 178 to 189 are Extracellular-facing; that stretch reads DFHVFHRKDSPN. Residues 190–214 form a helical membrane-spanning segment; that stretch reads VFLFKLGGVTASFTASVGSLFLTAI. Residues 215 to 234 lie on the Cytoplasmic side of the membrane; the sequence is DRYISIHRPLAYKRIVTRPK. A helical membrane pass occupies residues 235–257; the sequence is AVVAFCVMWTIAIVIAVLPLLGW. Residues 258 to 275 lie on the Extracellular side of the membrane; the sequence is NCKKLNSVCSDIFPLIDE. The chain crosses the membrane as a helical span at residues 276 to 301; it reads TYLMFWIGVTSILLLFIVYAYMYILW. The Cytoplasmic portion of the chain corresponds to 302–346; that stretch reads KAHSHAVRMLQRGTQKSIIIQSTEDGKVQITRPDQTRMDIRLAKT. A helical transmembrane segment spans residues 347-367; it reads LVLILVVLIICWGPLLAIMVY. The Extracellular portion of the chain corresponds to 368–379; sequence DVFGKMNKLIKT. The chain crosses the membrane as a helical span at residues 380-401; sequence IFAFCSMLCLLNSTVNPIIYAL. Residues 402–473 are Cytoplasmic-facing; the sequence is RSKDLRHAFR…VSTDTTAEAL (72 aa). The S-palmitoyl cysteine moiety is linked to residue Cys-417.

This sequence belongs to the G-protein coupled receptor 1 family. Palmitoylation at Cys-417 is important for recruitment at both plasma membrane and lipid rafts and association with G protein alpha subunits.

Its subcellular location is the cell membrane. It is found in the mitochondrion outer membrane. The protein localises to the cell projection. The protein resides in the axon. It localises to the presynapse. Functionally, G-protein coupled receptor for cannabinoids. Mediates many cannabinoid-induced effects in the central nervous system (CNS), as well as in peripheral tissues. Regulates cellular respiration and energy production in response to cannabinoids. Signaling typically involves reduction in cyclic AMP. This Taeniopygia guttata (Zebra finch) protein is Cannabinoid receptor 1 (CNR1).